The following is a 381-amino-acid chain: Cobalt-precorrin-5B C(1)-methyltransferase (381 aa).

It belongs to the CbiD family.

The catalysed reaction is Co-precorrin-5B + S-adenosyl-L-methionine = Co-precorrin-6A + S-adenosyl-L-homocysteine. The protein operates within cofactor biosynthesis; adenosylcobalamin biosynthesis; cob(II)yrinate a,c-diamide from sirohydrochlorin (anaerobic route): step 6/10. In terms of biological role, catalyzes the methylation of C-1 in cobalt-precorrin-5B to form cobalt-precorrin-6A. The polypeptide is Cobalt-precorrin-5B C(1)-methyltransferase (Clostridium botulinum (strain Alaska E43 / Type E3)).